The primary structure comprises 127 residues: Major sperm protein 55/57 (127 aa).

An N-acetylalanine modification is found at alanine 2. Residues 9–126 (DIQTQPGTKI…RRKNLPIEYN (118 aa)) form the MSP domain.

As to expression, sperm.

It is found in the cell projection. The protein resides in the pseudopodium. The protein localises to the cytoplasm. It localises to the cytoskeleton. In terms of biological role, central component in molecular interactions underlying sperm crawling. Forms an extensive filament system that extends from sperm villipoda, along the leading edge of the pseudopod. The protein is Major sperm protein 55/57 (msp-55) of Caenorhabditis elegans.